The sequence spans 323 residues: MNALPPAIFLMGPTAAGKTDLAIELSKVLPCELISVDSALVYRGMDIGTAKPSKAQLAEFPHRLIDILDPAQSYSAADFRSDALAAMAQITARGNIPLLVGGTMLYFKALLDGLADMPAANAAVRAQLEADAQAFGWQSLHDQLAVVDPVSAARIHPNDPQRLIRALEVYRVSGMSMTAHREQQTAQSTEAAASGCQQLPYTVANLAIAPADRKVLHQRIALRFEQMLDQGFLDEVLALRSRGDLHAGLPSIRAVGYRQVWDHLDGKLTREEMQERGIIATRQLAKRQFTWLRSWDDLHWLDSLASDNLSRALKYLGSVSILS.

12 to 19 (GPTAAGKT) provides a ligand contact to ATP. 14 to 19 (TAAGKT) is a binding site for substrate. Interaction with substrate tRNA stretches follow at residues 37–40 (DSAL) and 161–165 (QRLIR).

This sequence belongs to the IPP transferase family. As to quaternary structure, monomer. Mg(2+) serves as cofactor.

It carries out the reaction adenosine(37) in tRNA + dimethylallyl diphosphate = N(6)-dimethylallyladenosine(37) in tRNA + diphosphate. Catalyzes the transfer of a dimethylallyl group onto the adenine at position 37 in tRNAs that read codons beginning with uridine, leading to the formation of N6-(dimethylallyl)adenosine (i(6)A). The polypeptide is tRNA dimethylallyltransferase (Pseudomonas syringae pv. tomato (strain ATCC BAA-871 / DC3000)).